A 614-amino-acid polypeptide reads, in one-letter code: Vitamin B12 transporter BtuB (614 aa).

Positions 1 to 20 (MIKKASLLTACSVTAFSAWA) are cleaved as a signal peptide. Positions 26-33 (DTLVVTAN) match the TonB box motif. The region spanning 38-152 (PRSTVLAPTT…IGGVVNIITT (115 aa)) is the TBDR plug domain. Cyanocob(III)alamin contacts are provided by residues leucine 83, serine 85, asparagine 92, and 110 to 111 (VS). A TBDR beta-barrel domain is found at 155 to 614 (HPGTEISAGW…EYTLXGSYTF (460 aa)). The next 3 beta stranded transmembrane spans lie at 158-165 (TEISAGWG), 169-178 (YQNYDVSTQQ), and 184-195 (TRVTLLGDYAHT). Residues aspartate 199, glutamine 211, aspartate 213, and aspartate 215 each contribute to the Ca(2+) site. Beta stranded transmembrane passes span 217–227 (FLSKTLYGALE) and 232–248 (DAWS…NRTN). Tyrosine 249 and aspartate 250 together coordinate Ca(2+). Cyanocob(III)alamin is bound at residue alanine 251. Aspartate 261 contributes to the Ca(2+) binding site. 14 beta stranded membrane-spanning segments follow: residues 263–277 (RKLY…LRYN), 279–296 (ELIK…KDYN), 309–325 (TLDE…NNII), 328–337 (HGNIGAGVDW), 353–369 (YDQR…QQVG), 371–381 (FTFEGAGRSDD), 385–400 (FGRH…WEFI), 403–417 (YRFI…KAPN), 434–443 (KSKQWEGAFE), 449–458 (VNWRISGYRN), 473–490 (YYNE…TANF), 494–509 (PLTH…ARNA), 517–529 (RRAK…QLDW), and 535–550 (DWGI…YDKD). Residue threonine 309 coordinates cyanocob(III)alamin. Arginine 517 lines the cyanocob(III)alamin pocket. Tyrosine 551 lines the cyanocob(III)alamin pocket. A run of 3 beta stranded transmembrane segments spans residues 558–572 (TVKM…LAVA), 585–596 (IANLFDKDYETV), and 602–614 (AGRE…SYTF). The short motif at 597–614 (YGYQTAGREYTLXGSYTF) is the TonB C-terminal box element.

It belongs to the TonB-dependent receptor family. BtuB (TC 1.B.14.3.1) subfamily.

Its subcellular location is the cell outer membrane. Its function is as follows. Involved in the active translocation of vitamin B12 (cyanocobalamin) across the outer membrane to the periplasmic space. It derives its energy for transport by interacting with the trans-periplasmic membrane protein TonB. The sequence is that of Vitamin B12 transporter BtuB from Escherichia coli O6:H1 (strain CFT073 / ATCC 700928 / UPEC).